A 347-amino-acid chain; its full sequence is DnaJ homolog subfamily C member 22 (347 aa).

Positions 4-50 (GLLMTYTLWAVGGPAGLHHLYLGRDSHALLWMLTLGGGGLGWLWEFW) constitute a TM2 domain. A run of 7 helical transmembrane segments spans residues 5–25 (LLMT…HLYL), 32–52 (LLWM…FWML), 81–101 (FVAQ…SLSF), 105–125 (FYIV…AAVG), 135–155 (LGAA…ILPI), 186–206 (GLAY…HTAV), and 218–238 (FLSW…VLLL). The 71-residue stretch at 277-347 (LALQVFGLSE…GSWRWEETSF (71 aa)) folds into the J domain.

It is found in the membrane. Functionally, may function as a co-chaperone. This Bos taurus (Bovine) protein is DnaJ homolog subfamily C member 22 (DNAJC22).